We begin with the raw amino-acid sequence, 242 residues long: tRNA pseudouridine synthase A (242 aa).

Residue Asp-51 is the Nucleophile of the active site. Residue Tyr-107 participates in substrate binding.

It belongs to the tRNA pseudouridine synthase TruA family. Homodimer.

It catalyses the reaction uridine(38/39/40) in tRNA = pseudouridine(38/39/40) in tRNA. Functionally, formation of pseudouridine at positions 38, 39 and 40 in the anticodon stem and loop of transfer RNAs. The chain is tRNA pseudouridine synthase A from Helicobacter pylori (strain P12).